The following is a 393-amino-acid chain: S-adenosylmethionine synthase 2 (393 aa).

Position 9 (glutamate 9) interacts with Mg(2+). Residue histidine 15 coordinates ATP. Glutamate 43 contributes to the K(+) binding site. L-methionine contacts are provided by glutamate 56 and glutamine 99. Residues 167 to 169, 235 to 238, aspartate 246, 252 to 253, alanine 269, lysine 273, and lysine 277 contribute to the ATP site; these read DGK, SGRF, and RK. L-methionine is bound at residue aspartate 246. Lysine 277 lines the L-methionine pocket.

The protein belongs to the AdoMet synthase family. As to quaternary structure, homotetramer. Mn(2+) serves as cofactor. It depends on Mg(2+) as a cofactor. The cofactor is Co(2+). Requires K(+) as cofactor. As to expression, roots and shoots.

The protein localises to the cytoplasm. It catalyses the reaction L-methionine + ATP + H2O = S-adenosyl-L-methionine + phosphate + diphosphate. Its pathway is amino-acid biosynthesis; S-adenosyl-L-methionine biosynthesis; S-adenosyl-L-methionine from L-methionine: step 1/1. Catalyzes the formation of S-adenosylmethionine from methionine and ATP. The reaction comprises two steps that are both catalyzed by the same enzyme: formation of S-adenosylmethionine (AdoMet) and triphosphate, and subsequent hydrolysis of the triphosphate. This is S-adenosylmethionine synthase 2 (SAMS2) from Pinus contorta (Shore pine).